Reading from the N-terminus, the 932-residue chain is DNA mismatch repair protein MutS (932 aa).

Residue 615 to 622 coordinates ATP; that stretch reads GPNMAGKS.

It belongs to the DNA mismatch repair MutS family.

This protein is involved in the repair of mismatches in DNA. It is possible that it carries out the mismatch recognition step. This protein has a weak ATPase activity. In Clostridium botulinum (strain Hall / ATCC 3502 / NCTC 13319 / Type A), this protein is DNA mismatch repair protein MutS.